The following is a 123-amino-acid chain: Small ribosomal subunit protein uS12 (123 aa).

The interval 11-32 is disordered; the sequence is PRQEKTYREKARHLGASPQKRG. Aspartate 89 is modified (3-methylthioaspartic acid).

Belongs to the universal ribosomal protein uS12 family. As to quaternary structure, part of the 30S ribosomal subunit. Contacts proteins S8 and S17. May interact with IF1 in the 30S initiation complex.

In terms of biological role, with S4 and S5 plays an important role in translational accuracy. Its function is as follows. Interacts with and stabilizes bases of the 16S rRNA that are involved in tRNA selection in the A site and with the mRNA backbone. Located at the interface of the 30S and 50S subunits, it traverses the body of the 30S subunit contacting proteins on the other side and probably holding the rRNA structure together. The combined cluster of proteins S8, S12 and S17 appears to hold together the shoulder and platform of the 30S subunit. The chain is Small ribosomal subunit protein uS12 from Methylocella silvestris (strain DSM 15510 / CIP 108128 / LMG 27833 / NCIMB 13906 / BL2).